We begin with the raw amino-acid sequence, 347 residues long: Selenide, water dikinase (347 aa).

C17 is a catalytic residue. ATP is bound by residues K20 and 48–50 (TRD). A Mg(2+)-binding site is contributed by D51. Residues D68, D91, and 139–141 (GHS) contribute to the ATP site. D91 provides a ligand contact to Mg(2+). D227 provides a ligand contact to Mg(2+).

It belongs to the selenophosphate synthase 1 family. Class I subfamily. As to quaternary structure, homodimer. The cofactor is Mg(2+).

It carries out the reaction hydrogenselenide + ATP + H2O = selenophosphate + AMP + phosphate + 2 H(+). Functionally, synthesizes selenophosphate from selenide and ATP. This chain is Selenide, water dikinase, found in Salmonella typhimurium (strain LT2 / SGSC1412 / ATCC 700720).